A 459-amino-acid chain; its full sequence is Cysteine--tRNA ligase (459 aa).

Zn(2+) is bound at residue C29. The short motif at 31–41 is the 'HIGH' region element; sequence PTVYNLVHIGN. Residues C209, H234, and E238 each coordinate Zn(2+). The short motif at 267–271 is the 'KMSKS' region element; the sequence is KMSKS. Residue K270 participates in ATP binding.

It belongs to the class-I aminoacyl-tRNA synthetase family. In terms of assembly, monomer. It depends on Zn(2+) as a cofactor.

Its subcellular location is the cytoplasm. The enzyme catalyses tRNA(Cys) + L-cysteine + ATP = L-cysteinyl-tRNA(Cys) + AMP + diphosphate. The polypeptide is Cysteine--tRNA ligase (Saccharophagus degradans (strain 2-40 / ATCC 43961 / DSM 17024)).